The sequence spans 254 residues: PF03932 family protein CutC (254 aa).

This sequence belongs to the CutC family.

The protein resides in the cytoplasm. The polypeptide is PF03932 family protein CutC (Yersinia pseudotuberculosis serotype O:1b (strain IP 31758)).